The sequence spans 1132 residues: Tyrosine-protein kinase JAK2 (1132 aa).

Positions 1 to 239 are interaction with cytokine/interferon/growth hormone receptors; it reads MGMACLTMTE…RYRFRRFIQQ (239 aa). Residues 37–380 form the FERM domain; sequence PVLQVYLYHS…GYYRLTADAH (344 aa). Position 119 is a phosphotyrosine; by autocatalysis (tyrosine 119). Residues tyrosine 372 and tyrosine 373 each carry the phosphotyrosine modification. In terms of domain architecture, SH2; atypical spans 401–482; it reads HGPISMDFAI…SLKDLLNCYQ (82 aa). Phosphoserine is present on serine 523. Residues 545–809 enclose the Protein kinase 1 domain; it reads LIFNESLGQG…AIIRDLNSLF (265 aa). 2 positions are modified to phosphotyrosine: tyrosine 570 and tyrosine 813. A Protein kinase 2 domain is found at 849–1124; that stretch reads LKFLQQLGKG…SFRDLALRVD (276 aa). 855 to 863 contacts ATP; the sequence is LGKGNFGSV. Tyrosine 868 is subject to Phosphotyrosine; by autocatalysis. An ATP-binding site is contributed by lysine 882. Residues tyrosine 966 and tyrosine 972 each carry the phosphotyrosine; by autocatalysis modification. Aspartate 976 serves as the catalytic Proton acceptor. Phosphotyrosine; by autocatalysis occurs at positions 1007 and 1008.

It belongs to the protein kinase superfamily. Tyr protein kinase family. JAK subfamily. In terms of assembly, interacts with EPOR, LYN, SIRPA, SH2B1 and TEC. Interacts with IL23R. Interacts with SKB1. Interacts with STAM2. Interacts with IFNGR2 (via intracellular domain). Interacts with LEPR (Isoform B). Interacts with HSP90AB1; promotes functional activation in a heat shock-dependent manner. Interacts with STRA6. Interacts with RHEX; this interaction occurs in a erythropoietin (EPO)-dependent manner. Interacts with ASB2; the interaction targets JAK2 for Notch-induced proteasomal degradation. Interacts with MPL/TPOR. It depends on Mg(2+) as a cofactor. Post-translationally, autophosphorylated, leading to regulate its activity. Leptin promotes phosphorylation on tyrosine residues, including phosphorylation on Tyr-813. Autophosphorylation on Tyr-119 in response to EPO down-regulates its kinase activity. Autophosphorylation on Tyr-868, Tyr-966 and Tyr-972 in response to growth hormone (GH) are required for maximal kinase activity. Also phosphorylated by TEC. Phosphorylated on tyrosine residues in response to interferon gamma signaling. Phosphorylated on tyrosine residues in response to a signaling cascade that is activated by increased cellular retinol. In terms of processing, undergoes Notch-induced ubiquitination and subsequent proteasomal degradation which is mediated by ASB1 or ASB2, the substrate-recognition components of probable ECS E3 ubiquitin-protein ligase complexes. In terms of tissue distribution, ubiquitously expressed throughout most tissues.

The protein resides in the endomembrane system. Its subcellular location is the cytoplasm. It localises to the nucleus. It catalyses the reaction L-tyrosyl-[protein] + ATP = O-phospho-L-tyrosyl-[protein] + ADP + H(+). Its activity is regulated as follows. Regulated by autophosphorylation, can both activate or decrease activity. Heme regulates its activity by enhancing the phosphorylation on Tyr-1007 and Tyr-1008. In terms of biological role, non-receptor tyrosine kinase involved in various processes such as cell growth, development, differentiation or histone modifications. Mediates essential signaling events in both innate and adaptive immunity. In the cytoplasm, plays a pivotal role in signal transduction via its association with type I receptors such as growth hormone (GHR), prolactin (PRLR), leptin (LEPR), erythropoietin (EPOR), thrombopoietin receptor (MPL/TPOR); or type II receptors including IFN-alpha, IFN-beta, IFN-gamma and multiple interleukins. Following ligand-binding to cell surface receptors, phosphorylates specific tyrosine residues on the cytoplasmic tails of the receptor, creating docking sites for STATs proteins. Subsequently, phosphorylates the STATs proteins once they are recruited to the receptor. Phosphorylated STATs then form homodimer or heterodimers and translocate to the nucleus to activate gene transcription. For example, cell stimulation with erythropoietin (EPO) during erythropoiesis leads to JAK2 autophosphorylation, activation, and its association with erythropoietin receptor (EPOR) that becomes phosphorylated in its cytoplasmic domain. Then, STAT5 (STAT5A or STAT5B) is recruited, phosphorylated and activated by JAK2. Once activated, dimerized STAT5 translocates into the nucleus and promotes the transcription of several essential genes involved in the modulation of erythropoiesis. Part of a signaling cascade that is activated by increased cellular retinol and that leads to the activation of STAT5 (STAT5A or STAT5B). In addition, JAK2 mediates angiotensin-2-induced ARHGEF1 phosphorylation. Plays a role in cell cycle by phosphorylating CDKN1B. Cooperates with TEC through reciprocal phosphorylation to mediate cytokine-driven activation of FOS transcription. In the nucleus, plays a key role in chromatin by specifically mediating phosphorylation of 'Tyr-41' of histone H3 (H3Y41ph), a specific tag that promotes exclusion of CBX5 (HP1 alpha) from chromatin. Up-regulates the potassium voltage-gated channel activity of KCNA3. The protein is Tyrosine-protein kinase JAK2 of Homo sapiens (Human).